The chain runs to 134 residues: Large ribosomal subunit protein uL16c (134 aa).

A disordered region spans residues 1-21 (MLSPKRTKYRKHHRGRMRGKA).

The protein belongs to the universal ribosomal protein uL16 family. Part of the 50S ribosomal subunit.

The protein localises to the plastid. The protein resides in the chloroplast. The sequence is that of Large ribosomal subunit protein uL16c from Chlorella vulgaris (Green alga).